Consider the following 225-residue polypeptide: Suppressor of cytokine signaling 3 (225 aa).

The kinase inhibitory region (KIR) stretch occupies residues L22–L33. The extended SH2 subdomain (ESS) stretch occupies residues V34 to G45. The SH2 domain maps to F46–E142. Residues P131–E142 show a composition bias toward pro residues. Residues P131–R162 form a disordered region. The span at P143–P155 shows a compositional bias: low complexity. An SOCS box domain is found at V177 to P224.

As to quaternary structure, interacts with multiple activated proteins of the tyrosine kinase signaling pathway including IGF1 receptor, insulin receptor and JAK2. Binding to JAK2 is mediated through the KIR and SH2 domains to a phosphorylated tyrosine residue within the JAK2 JH1 domain. Binds specific activated tyrosine residues of the leptin, EPO, IL12, GSCF and gp130 receptors. Interaction with CSNK1E stabilizes SOCS3 protein. Component of the probable ECS(SOCS3) E3 ubiquitin-protein ligase complex which contains CUL5, RNF7/RBX2, Elongin BC complex and SOCS3. Interacts with CUL5, RNF7, ELOB and ELOC. Interacts with CUL2. Interacts with FGFR3. Interacts with INSR. Interacts with BCL10; this interaction may interfere with BCL10-binding with PELI2. Interacts with NOD2 (via CARD domain); the interaction promotes NOD2 degradation. In terms of processing, phosphorylated on tyrosine residues after stimulation by the cytokines, IL-2, EPO or IGF1. In terms of tissue distribution, widely expressed with high expression in heart, placenta, skeletal muscle, peripheral blood leukocytes, fetal and adult lung, and fetal liver and kidney. Lower levels in thymus.

Its pathway is protein modification; protein ubiquitination. Its function is as follows. SOCS family proteins form part of a classical negative feedback system that regulates cytokine signal transduction. SOCS3 is involved in negative regulation of cytokines that signal through the JAK/STAT pathway. Inhibits cytokine signal transduction by binding to tyrosine kinase receptors including IL6ST/gp130, LIF, erythropoietin, insulin, IL12, GCSF and leptin receptors. Binding to JAK2 inhibits its kinase activity and regulates IL6 signaling. Suppresses fetal liver erythropoiesis. Regulates onset and maintenance of allergic responses mediated by T-helper type 2 cells. Probable substrate recognition component of a SCF-like ECS (Elongin BC-CUL2/5-SOCS-box protein) E3 ubiquitin-protein ligase complex which mediates the ubiquitination and subsequent proteasomal degradation of target proteins. This is Suppressor of cytokine signaling 3 from Homo sapiens (Human).